The following is a 105-amino-acid chain: Replication initiation control protein YabA (105 aa).

The Zn(2+) site is built by His-79, Cys-81, Cys-95, and Cys-98.

It belongs to the YabA family. In terms of assembly, homotetramer. Interacts with both DnaA and DnaN, acting as a bridge between these two proteins. Zn(2+) serves as cofactor.

It is found in the cytoplasm. The protein resides in the nucleoid. Involved in control of chromosome replication initiation. Inhibits the cooperative binding of DnaA to the oriC region, thus negatively regulating initiation of chromosome replication. Inhibits the ability of DnaA-ATP to form a helix on DNA; does not disassemble preformed DnaA-DNA helices. Decreases the residence time of DnaA on the chromosome at its binding sites (oriC, replication forks and promoter-binding sites). Tethers DnaA to the replication machinery via the DNA polymerase beta sliding clamp subunit (dnaN). Associates with oriC and other DnaA targets on the chromosome in a DnaA-dependent manner. In Streptococcus sanguinis (strain SK36), this protein is Replication initiation control protein YabA.